Reading from the N-terminus, the 553-residue chain is Probable bifunctional riboflavin biosynthesis protein RIBA 2, chloroplastic (553 aa).

Residues 1–56 (MASISPTSSSVAALRGHPVQFVKGGAVSKEAKGSISFSPVANSNNANVKFTGLRVA) constitute a chloroplast transit peptide. A DHBP synthase region spans residues 62–336 (DGAFPGDGYS…IADLIRYRRK (275 aa)). Positions 70 to 90 (YSGNDNTVLPKSTSVRGQDYP) are disordered. Residues 72–85 (GNDNTVLPKSTSVR) show a composition bias toward polar residues. D-ribulose 5-phosphate-binding positions include 160–161 (RE), D165, 275–279 (RAGHT), and E299. Residue E161 participates in Mg(2+) binding. H278 provides a ligand contact to Mg(2+). The interval 337–553 (RDRLVERSSV…TGSNGAKGEH (217 aa)) is GTP cyclohydrolase II. GTP is bound at residue 387 to 391 (RVHSE). Zn(2+) is bound by residues C392, C403, and C405. Residues Q408, 431-433 (EGR), and T453 each bind GTP. D465 acts as the Proton acceptor; for GTP cyclohydrolase activity in catalysis. R467 serves as the catalytic Nucleophile; for GTP cyclohydrolase activity. GTP-binding residues include T488 and K493.

The protein in the N-terminal section; belongs to the DHBP synthase family. It in the C-terminal section; belongs to the GTP cyclohydrolase II family. Mg(2+) is required as a cofactor. It depends on Mn(2+) as a cofactor. Zn(2+) serves as cofactor.

Its subcellular location is the plastid. The protein localises to the chloroplast. It catalyses the reaction D-ribulose 5-phosphate = (2S)-2-hydroxy-3-oxobutyl phosphate + formate + H(+). It carries out the reaction GTP + 4 H2O = 2,5-diamino-6-hydroxy-4-(5-phosphoribosylamino)-pyrimidine + formate + 2 phosphate + 3 H(+). The protein operates within cofactor biosynthesis; riboflavin biosynthesis; 2-hydroxy-3-oxobutyl phosphate from D-ribulose 5-phosphate: step 1/1. It functions in the pathway cofactor biosynthesis; riboflavin biosynthesis; 5-amino-6-(D-ribitylamino)uracil from GTP: step 1/4. Functionally, involved in riboflavin biosynthesis. Catalyzes both the conversion of D-ribulose 5-phosphate to formate and 3,4-dihydroxy-2-butanone 4-phosphate and the conversion of GTP to 2,5-diamino-6-ribosylamino-4(3H)-pyrimidinone 5'-phosphate (DARP), formate and pyrophosphate. The polypeptide is Probable bifunctional riboflavin biosynthesis protein RIBA 2, chloroplastic (RIBA2) (Oryza sativa subsp. japonica (Rice)).